Here is a 55-residue protein sequence, read N- to C-terminus: MASSTDVRPKITLACEVCKHRNYITKKNRRNDPDRLELKKFCRNCGSHQAHRETR.

The protein belongs to the bacterial ribosomal protein bL33 family.

The protein is Large ribosomal subunit protein bL33A of Mycobacterium ulcerans (strain Agy99).